The following is a 373-amino-acid chain: MNTFGDNFRVTTWGESHGKALGAVIDGCPSNLPISEEDIQNELNRRRPGYSIFSTPRKEEDKLEILSGIFEGKTTGTPISGLVFNKGQKSKDYSKIKNTPRPGHADLNYFLKYGNYDYRGGGRSSGRTTIGNVIGGAVAKKLIEFTHNIKIIGYSTKIGKINGDFDYYKNPEFFESNSNIEKLFEKIENNPLRCPSKNSDEMKDYVLDAMDKQDSVGGIIEIIIKGIPQGVGNPVFNKLEGKLGSAFIGINAVKGFEIGRGFESSELYGSEMNDSYYMNKDSIKGKTNNTGGIIGGISTGSPVVLRVSIKPTPSISKIQESVNLISNENEKIEIGGRHDPIIVPRVIPVLESMAAITVADLMISSGYIDPCRI.

R46 is a binding site for NADP(+). Residues 123–125, 251–252, G295, 310–314, and R337 contribute to the FMN site; these read RSS, NA, and KPTPS.

It belongs to the chorismate synthase family. FMNH2 serves as cofactor.

The catalysed reaction is 5-O-(1-carboxyvinyl)-3-phosphoshikimate = chorismate + phosphate. Its pathway is metabolic intermediate biosynthesis; chorismate biosynthesis; chorismate from D-erythrose 4-phosphate and phosphoenolpyruvate: step 7/7. Its function is as follows. Catalyzes the anti-1,4-elimination of the C-3 phosphate and the C-6 proR hydrogen from 5-enolpyruvylshikimate-3-phosphate (EPSP) to yield chorismate, which is the branch point compound that serves as the starting substrate for the three terminal pathways of aromatic amino acid biosynthesis. This reaction introduces a second double bond into the aromatic ring system. The chain is Chorismate synthase from Methanococcus maripaludis (strain C5 / ATCC BAA-1333).